Here is a 152-residue protein sequence, read N- to C-terminus: Transcriptional regulator MraZ (152 aa).

SpoVT-AbrB domains lie at 5 to 52 (ASAV…PLNQ) and 81 to 124 (ATEC…SESE).

This sequence belongs to the MraZ family. In terms of assembly, forms oligomers.

The protein localises to the cytoplasm. It is found in the nucleoid. The polypeptide is Transcriptional regulator MraZ (Histophilus somni (strain 2336) (Haemophilus somnus)).